The sequence spans 207 residues: Probable nicotinate-nucleotide adenylyltransferase (207 aa).

Belongs to the NadD family.

It carries out the reaction nicotinate beta-D-ribonucleotide + ATP + H(+) = deamido-NAD(+) + diphosphate. Its pathway is cofactor biosynthesis; NAD(+) biosynthesis; deamido-NAD(+) from nicotinate D-ribonucleotide: step 1/1. In terms of biological role, catalyzes the reversible adenylation of nicotinate mononucleotide (NaMN) to nicotinic acid adenine dinucleotide (NaAD). This Desulfitobacterium hafniense (strain DSM 10664 / DCB-2) protein is Probable nicotinate-nucleotide adenylyltransferase.